Here is a 433-residue protein sequence, read N- to C-terminus: uncharacterized protein (433 aa).

The N-terminal stretch at methionine 1–serine 26 is a signal peptide. Residues asparagine 59, asparagine 72, asparagine 125, asparagine 159, asparagine 210, asparagine 275, asparagine 282, and asparagine 323 are each glycosylated (N-linked (GlcNAc...) asparagine). Alanine 405 is lipidated: GPI-anchor amidated alanine. Positions serine 406–serine 433 are cleaved as a propeptide — removed in mature form.

It localises to the cell membrane. This is an uncharacterized protein from Arabidopsis thaliana (Mouse-ear cress).